A 655-amino-acid chain; its full sequence is p-hydroxybenzoic acid efflux pump subunit AaeB (655 aa).

A run of 10 helical transmembrane segments spans residues 13 to 33, 38 to 58, 69 to 89, 93 to 113, 121 to 141, 152 to 172, 370 to 390, 407 to 427, 431 to 451, and 481 to 501; these read FAVK…HFQL, WAVL…GGEP, LRII…IAMI, LLMI…SSLV, WGLA…EPLL, EIVV…PRSI, LFWL…IAVV, FIYG…VIIP, QSML…GIEV, and LFLD…TVIL.

This sequence belongs to the aromatic acid exporter ArAE (TC 2.A.85) family.

It localises to the cell inner membrane. Its function is as follows. Forms an efflux pump with AaeA. Could function as a metabolic relief valve, allowing to eliminate certain compounds when they accumulate to high levels in the cell. This Escherichia fergusonii (strain ATCC 35469 / DSM 13698 / CCUG 18766 / IAM 14443 / JCM 21226 / LMG 7866 / NBRC 102419 / NCTC 12128 / CDC 0568-73) protein is p-hydroxybenzoic acid efflux pump subunit AaeB.